The chain runs to 81 residues: Cytotoxin 1d/1e (81 aa).

An N-terminal signal peptide occupies residues 1 to 21 (MKTLLLTLVVVTIVCLDLGYT). 4 disulfide bridges follow: Cys24/Cys42, Cys35/Cys59, Cys63/Cys74, and Cys75/Cys80.

It belongs to the three-finger toxin family. Short-chain subfamily. Type IA cytotoxin sub-subfamily. In terms of assembly, monomer in solution; Homodimer and oligomer in the presence of negatively charged lipids forming a pore with a size ranging between 20 and 30 Angstroms. Expressed by the venom gland.

Its subcellular location is the secreted. It is found in the target cell membrane. Functionally, shows cytolytic activity on many different cells by forming pore in lipid membranes. In vivo, increases heart rate or kills the animal by cardiac arrest. In addition, it binds to heparin with high affinity, interacts with Kv channel-interacting protein 1 (KCNIP1) in a calcium-independent manner, and binds to integrin alpha-V/beta-3 (ITGAV/ITGB3) with moderate affinity. The chain is Cytotoxin 1d/1e from Naja atra (Chinese cobra).